Here is a 165-residue protein sequence, read N- to C-terminus: Transcription elongation factor A protein-like 1 (165 aa).

Disordered stretches follow at residues 1 to 66 (MENS…LLPE) and 89 to 124 (IPME…GDIH). Acidic residues predominate over residues 33–60 (CSEDDQSSEDLSSEEQSSDEEFFPEELL). The span at 101–124 (HKLEEGSFKERLARSRPQFRGDIH) shows a compositional bias: basic and acidic residues.

The protein belongs to the TFS-II family. TFA subfamily.

The protein localises to the nucleus. Its function is as follows. May be involved in transcriptional regulation. Modulates various viral and cellular promoters in a promoter context-dependent manner. Does not bind DNA directly. This is Transcription elongation factor A protein-like 1 from Rattus norvegicus (Rat).